The chain runs to 159 residues: Neuroglobin-1 (159 aa).

The region spanning 3–151 (KLTEKEKELI…VVAAMSRGWA (149 aa)) is the Globin domain. Residues His-66 and His-98 each coordinate heme b.

Belongs to the globin family. In terms of assembly, monomer. Homodimers and homotetramers. Mainly monomeric but also detected as part of homodimers and homotetramers.

It is found in the cytoplasm. It localises to the cytosol. The protein localises to the mitochondrion matrix. The enzyme catalyses Fe(III)-heme b-[protein] + nitric oxide + H2O = Fe(II)-heme b-[protein] + nitrite + 2 H(+). Monomeric globin with a bis-histidyl six-coordinate heme-iron atom through which it can bind dioxygen, carbon monoxide and nitric oxide. Could help transport oxygen and increase its availability to the metabolically active neuronal tissues, though its low quantity in tissues as well as its high affinity for dioxygen, which may limit its oxygen-releasing ability, argue against it. The ferrous/deoxygenated form exhibits a nitrite reductase activity and it could produce nitric oxide which in turn inhibits cellular respiration in response to hypoxia. In its ferrous/deoxygenated state, it may also exhibit GDI (Guanine nucleotide Dissociation Inhibitor) activity toward heterotrimeric G-alpha proteins, thereby regulating signal transduction to facilitate neuroprotective responses in the wake of hypoxia and associated oxidative stress. The chain is Neuroglobin-1 (ngb1) from Oncorhynchus mykiss (Rainbow trout).